Reading from the N-terminus, the 441-residue chain is Arginine biosynthesis bifunctional protein ArgJ, mitochondrial (441 aa).

Substrate-binding residues include Thr177, Lys204, Thr215, Glu301, Asn436, and Ser441. The active-site Nucleophile is Thr215.

Belongs to the ArgJ family. Heterodimer of an alpha and a beta chain. In terms of processing, the alpha and beta chains are autoproteolytically processed from a single precursor protein within the mitochondrion.

The protein resides in the mitochondrion matrix. It carries out the reaction N(2)-acetyl-L-ornithine + L-glutamate = N-acetyl-L-glutamate + L-ornithine. The enzyme catalyses L-glutamate + acetyl-CoA = N-acetyl-L-glutamate + CoA + H(+). Its pathway is amino-acid biosynthesis; L-arginine biosynthesis; L-ornithine and N-acetyl-L-glutamate from L-glutamate and N(2)-acetyl-L-ornithine (cyclic): step 1/1. The protein operates within amino-acid biosynthesis; L-arginine biosynthesis; N(2)-acetyl-L-ornithine from L-glutamate: step 1/4. In terms of biological role, catalyzes two activities which are involved in the cyclic version of arginine biosynthesis: the synthesis of acetylglutamate from glutamate and acetyl-CoA, and of ornithine by transacetylation between acetylornithine and glutamate. This Lachancea thermotolerans (strain ATCC 56472 / CBS 6340 / NRRL Y-8284) (Yeast) protein is Arginine biosynthesis bifunctional protein ArgJ, mitochondrial.